We begin with the raw amino-acid sequence, 448 residues long: MSKKLISIVDVKDYVGQEVTIGAWVANKSGKGKIAFVQLRDGSAFFQGVAFKPNFIEKYGEESGLEKFDVIKRLNQETSVYVTGIVKEDERSKFGYELDITDLEIIGESHEYPITPKEHGTDFLMDNRHLWLRSRKQMAVMQIRNAIIYATYEFFDQNGFIKFDSPILSENAAEDSTELFETDYFGKPAFLSQSGQLYLEAGAMALGRVFDFGPVFRAEKSKTRRHLTEFWMMDAEYSFLSHEESLDLQEAYVKALIQGVLDRAPQALDILERDVEALKRYITEPFKRVSYDDAITLLQEHEADEDTDYEHLEHGDDFGSPHETWISNYFGVPTFVVNYPASFKAFYMKPVPGNPERVLCADLLAPEGYGEIIGGSMREDNYDALVAKMDELGMDKSEYDFYLDLRKYGSVPHGGFGIGIERMVTFVAGTKHIREAIPFPRMLHRIRP.

This sequence belongs to the class-II aminoacyl-tRNA synthetase family. Homodimer.

The protein localises to the cytoplasm. It carries out the reaction tRNA(Asn) + L-asparagine + ATP = L-asparaginyl-tRNA(Asn) + AMP + diphosphate + H(+). This is Asparagine--tRNA ligase from Streptococcus pyogenes serotype M2 (strain MGAS10270).